Here is a 587-residue protein sequence, read N- to C-terminus: Lamin-B1 (587 aa).

Residues Met1 to Ala11 show a composition bias toward polar residues. A disordered region spans residues Met1 to Arg29. An N-acetylalanine modification is found at Ala2. Residues Ala2–Glu34 form a head region. Phosphothreonine is present on residues Thr3 and Thr5. At Arg14 the chain carries Omega-N-methylarginine. A Phosphoserine modification is found at Ser16. The residue at position 20 (Thr20) is a Phosphothreonine. Ser23 is modified (phosphoserine). At Thr25 the chain carries Phosphothreonine. Position 28 is a phosphoserine (Ser28). The IF rod domain occupies Glu32–Leu388. A coil 1A region spans residues Glu35 to Glu69. A linker 1 region spans residues Val70 to Leu81. The tract at residues Tyr82–Glu215 is coil 1B. Lys102 participates in a covalent cross-link: Glycyl lysine isopeptide (Lys-Gly) (interchain with G-Cter in SUMO2). N6-acetyllysine is present on Lys111. A Glycyl lysine isopeptide (Lys-Gly) (interchain with G-Cter in SUMO2) cross-link involves residue Lys123. The residue at position 126 (Ser126) is a Phosphoserine. Residue Lys145 forms a Glycyl lysine isopeptide (Lys-Gly) (interchain with G-Cter in SUMO2) linkage. Lys157 bears the N6-acetyllysine; alternate mark. A Glycyl lysine isopeptide (Lys-Gly) (interchain with G-Cter in SUMO2); alternate cross-link involves residue Lys157. Ser158 carries the phosphoserine modification. Lys181 is covalently cross-linked (Glycyl lysine isopeptide (Lys-Gly) (interchain with G-Cter in SUMO2)). A phosphoserine mark is found at Ser200 and Ser232. A linker 2 region spans residues Ile216–Ala243. Residues Lys241 and Lys261 each participate in a glycyl lysine isopeptide (Lys-Gly) (interchain with G-Cter in SUMO2) cross-link. Residues Gln244–Glu386 are coil 2. At Lys271 the chain carries N6-acetyllysine; alternate. Lys271 is covalently cross-linked (Glycyl lysine isopeptide (Lys-Gly) (interchain with G-Cter in SUMO2); alternate). Residues Ser278 and Ser302 each carry the phosphoserine modification. Lys312 is covalently cross-linked (Glycyl lysine isopeptide (Lys-Gly) (interchain with G-Cter in SUMO2)). The residue at position 330 (Lys330) is an N6-acetyllysine; alternate. A Glycyl lysine isopeptide (Lys-Gly) (interchain with G-Cter in SUMO2); alternate cross-link involves residue Lys330. Ser375 and Ser393 each carry phosphoserine. The interval Arg387–Met587 is tail. Low complexity predominate over residues Leu390–Val409. Residues Leu390–Ile432 form a disordered region. O-linked (GlcNAc) threonine glycosylation is present at Thr399. Arg413 carries the post-translational modification Omega-N-methylarginine. Positions Lys415–Asp420 match the Nuclear localization signal motif. Residues Val430–Phe546 enclose the LTD domain. Lys483 is modified (N6-acetyllysine). Residue Lys532 forms a Glycyl lysine isopeptide (Lys-Gly) (interchain with G-Cter in SUMO2) linkage. The residue at position 534 (Ser534) is a Phosphoserine. Residue Lys547 forms a Glycyl lysine isopeptide (Lys-Gly) (interchain with G-Cter in SUMO2) linkage. The interval Ile550–Met587 is disordered. Residues Pro551 to Pro561 are compositionally biased toward acidic residues. Residues Gln573–Met587 are compositionally biased toward polar residues. At Thr576 the chain carries Phosphothreonine. Cys584 bears the Cysteine methyl ester mark. Cys584 carries the S-farnesyl cysteine lipid modification. The propeptide at Ala585–Met587 is removed in mature form.

It belongs to the intermediate filament family. In terms of assembly, homodimer. Lamin dimers then assemble into dimeric head-to-tail polymers. Ultimately, two head-to-tail polymers assemble laterally into a protofilament with a uniformly shaped rod of 3.5 nm in diameter. Interacts with SPAG4 and SEPT12. Post-translationally, B-type lamins undergo a series of modifications, such as farnesylation and phosphorylation. Increased phosphorylation of the lamins occurs before envelope disintegration and probably plays a role in regulating lamin associations. In terms of processing, phosphorylation plays a key role in lamin organization, subcellular localization and nuclear envelope disintegration. Phosphorylation by CDK1 at Ser-23 and Ser-393 at the onset of mitosis drives lamin disassembly and nuclear envelope breakdown.

It is found in the nucleus lamina. In terms of biological role, lamins are intermediate filament proteins that assemble into a filamentous meshwork, and which constitute the major components of the nuclear lamina, a fibrous layer on the nucleoplasmic side of the inner nuclear membrane. Lamins provide a framework for the nuclear envelope, bridging the nuclear envelope and chromatin, thereby playing an important role in nuclear assembly, chromatin organization, nuclear membrane and telomere dynamics. The structural integrity of the lamina is strictly controlled by the cell cycle, as seen by the disintegration and formation of the nuclear envelope in prophase and telophase, respectively. The polypeptide is Lamin-B1 (Lmnb1) (Rattus norvegicus (Rat)).